A 495-amino-acid polypeptide reads, in one-letter code: Glutamate--tRNA ligase (495 aa).

The 'HIGH' region motif lies at 12–22 (PSPTGHLHIGN). Positions 259-263 (KLSKR) match the 'KMSKS' region motif. An ATP-binding site is contributed by Lys-262.

This sequence belongs to the class-I aminoacyl-tRNA synthetase family. Glutamate--tRNA ligase type 1 subfamily. In terms of assembly, monomer.

The protein localises to the cytoplasm. The catalysed reaction is tRNA(Glu) + L-glutamate + ATP = L-glutamyl-tRNA(Glu) + AMP + diphosphate. Functionally, catalyzes the attachment of glutamate to tRNA(Glu) in a two-step reaction: glutamate is first activated by ATP to form Glu-AMP and then transferred to the acceptor end of tRNA(Glu). This is Glutamate--tRNA ligase from Ligilactobacillus salivarius (strain UCC118) (Lactobacillus salivarius).